The sequence spans 338 residues: Glutamate/glutamine/aspartate/asparagine-binding protein BztA (338 aa).

The N-terminal stretch at 1–22 (MKKSAFFGSVALAALVAGAASA) is a signal peptide.

This sequence belongs to the bacterial solute-binding protein 3 family.

It is found in the periplasm. Its function is as follows. Part of a binding-protein-dependent transport system for glutamate, glutamine, aspartate and asparagine. This Rhodobacter capsulatus (strain ATCC BAA-309 / NBRC 16581 / SB1003) protein is Glutamate/glutamine/aspartate/asparagine-binding protein BztA (bztA).